The following is a 679-amino-acid chain: Acetyl-coenzyme A synthetase 2 (679 aa).

A disordered region spans residues 1–32 (MTSSPTHQVVHEANNIKKQETPKEFFERQPRQ). Residues 14–30 (NNIKKQETPKEFFERQP) are compositionally biased toward basic and acidic residues. CoA contacts are provided by residues 207-210 (RGGK) and Thr326. ATP is bound by residues 402–404 (GEP), 426–431 (DTYWQT), Asp517, and Arg532. Ser540 contributes to the CoA binding site. Residue Arg543 participates in ATP binding. Residue Arg611 participates in CoA binding.

It belongs to the ATP-dependent AMP-binding enzyme family.

It carries out the reaction acetate + ATP + CoA = acetyl-CoA + AMP + diphosphate. The chain is Acetyl-coenzyme A synthetase 2 (ACS2) from Debaryomyces hansenii (strain ATCC 36239 / CBS 767 / BCRC 21394 / JCM 1990 / NBRC 0083 / IGC 2968) (Yeast).